Here is a 362-residue protein sequence, read N- to C-terminus: Phosphoserine aminotransferase (362 aa).

Arg43 lines the L-glutamate pocket. Residues 77 to 78 (AR), Trp103, Thr153, Asp173, and Gln196 each bind pyridoxal 5'-phosphate. Lys197 is subject to N6-(pyridoxal phosphate)lysine.

The protein belongs to the class-V pyridoxal-phosphate-dependent aminotransferase family. SerC subfamily. In terms of assembly, homodimer. It depends on pyridoxal 5'-phosphate as a cofactor.

It localises to the cytoplasm. It carries out the reaction O-phospho-L-serine + 2-oxoglutarate = 3-phosphooxypyruvate + L-glutamate. The enzyme catalyses 4-(phosphooxy)-L-threonine + 2-oxoglutarate = (R)-3-hydroxy-2-oxo-4-phosphooxybutanoate + L-glutamate. Its pathway is amino-acid biosynthesis; L-serine biosynthesis; L-serine from 3-phospho-D-glycerate: step 2/3. It functions in the pathway cofactor biosynthesis; pyridoxine 5'-phosphate biosynthesis; pyridoxine 5'-phosphate from D-erythrose 4-phosphate: step 3/5. Its function is as follows. Catalyzes the reversible conversion of 3-phosphohydroxypyruvate to phosphoserine and of 3-hydroxy-2-oxo-4-phosphonooxybutanoate to phosphohydroxythreonine. This Legionella pneumophila (strain Paris) protein is Phosphoserine aminotransferase.